The chain runs to 136 residues: DNA-directed RNA polymerase subunit omega (136 aa).

This sequence belongs to the RNA polymerase subunit omega family. The RNAP catalytic core consists of 2 alpha, 1 beta, 1 beta' and 1 omega subunit. When a sigma factor is associated with the core the holoenzyme is formed, which can initiate transcription.

It carries out the reaction RNA(n) + a ribonucleoside 5'-triphosphate = RNA(n+1) + diphosphate. In terms of biological role, promotes RNA polymerase assembly. Latches the N- and C-terminal regions of the beta' subunit thereby facilitating its interaction with the beta and alpha subunits. This Acidiphilium cryptum (strain JF-5) protein is DNA-directed RNA polymerase subunit omega.